A 149-amino-acid polypeptide reads, in one-letter code: Nucleoside diphosphate kinase 1 (149 aa).

Positions 9, 57, 85, 91, 102, and 112 each coordinate ATP. Histidine 115 acts as the Pros-phosphohistidine intermediate in catalysis.

It belongs to the NDK family. It depends on Mg(2+) as a cofactor. Post-translationally, autophosphorylated.

It carries out the reaction a 2'-deoxyribonucleoside 5'-diphosphate + ATP = a 2'-deoxyribonucleoside 5'-triphosphate + ADP. The catalysed reaction is a ribonucleoside 5'-diphosphate + ATP = a ribonucleoside 5'-triphosphate + ADP. In terms of biological role, major role in the synthesis of nucleoside triphosphates other than ATP. The ATP gamma phosphate is transferred to the NDP beta phosphate via a ping-pong mechanism, using a phosphorylated active-site intermediate. Also exhibits a kinase-like activity towards histone H1. This chain is Nucleoside diphosphate kinase 1 (NDPK1), found in Saccharum officinarum (Sugarcane).